The chain runs to 602 residues: Chaperone protein DnaK (602 aa).

Thr-199 bears the Phosphothreonine; by autocatalysis mark.

This sequence belongs to the heat shock protein 70 family.

Its function is as follows. Acts as a chaperone. The chain is Chaperone protein DnaK from Carsonella ruddii (strain PV).